The primary structure comprises 329 residues: Biotin synthase (329 aa).

The region spanning 46-275 (FFGRRLKLVR…LNPKAELRAS (230 aa)) is the Radical SAM core domain. Cysteine 64, cysteine 68, and cysteine 71 together coordinate [4Fe-4S] cluster. [2Fe-2S] cluster-binding residues include cysteine 108, cysteine 140, cysteine 200, and arginine 273.

The protein belongs to the radical SAM superfamily. Biotin synthase family. As to quaternary structure, homodimer. [4Fe-4S] cluster serves as cofactor. Requires [2Fe-2S] cluster as cofactor.

The enzyme catalyses (4R,5S)-dethiobiotin + (sulfur carrier)-SH + 2 reduced [2Fe-2S]-[ferredoxin] + 2 S-adenosyl-L-methionine = (sulfur carrier)-H + biotin + 2 5'-deoxyadenosine + 2 L-methionine + 2 oxidized [2Fe-2S]-[ferredoxin]. It functions in the pathway cofactor biosynthesis; biotin biosynthesis; biotin from 7,8-diaminononanoate: step 2/2. Functionally, catalyzes the conversion of dethiobiotin (DTB) to biotin by the insertion of a sulfur atom into dethiobiotin via a radical-based mechanism. The sequence is that of Biotin synthase from Thermus thermophilus (strain ATCC 27634 / DSM 579 / HB8).